Here is a 757-residue protein sequence, read N- to C-terminus: RNA exonuclease 3 (757 aa).

Disordered regions lie at residues valine 56–leucine 259 and glutamate 474–alanine 590. Over residues glutamate 120–phenylalanine 132 the composition is skewed to basic and acidic residues. Polar residues-rich tracts occupy residues threonine 145 to serine 172, glutamine 202 to lysine 223, and methionine 230 to arginine 240. Low complexity-rich tracts occupy residues arginine 244–serine 253 and glutamate 474–serine 502. A compositionally biased stretch (polar residues) spans arginine 503–leucine 516. Composition is skewed to basic and acidic residues over residues arginine 543 to glycine 557 and serine 565 to glutamate 581. In terms of domain architecture, Exonuclease spans valine 597–valine 751.

Belongs to the REXO1/REXO3 family.

It is found in the cytoplasm. The protein resides in the nucleus. Its function is as follows. 3' to 5' exoribonuclease required for proper 3' end maturation of MRP RNA and of the U5L snRNA. This chain is RNA exonuclease 3 (REX3), found in Yarrowia lipolytica (strain CLIB 122 / E 150) (Yeast).